The sequence spans 228 residues: Glutamate transport system permease protein GluC (228 aa).

4 helical membrane-spanning segments follow: residues 16 to 36 (FWVTIQLTVYSAIGSMILGTI), 64 to 84 (LTLVILFCSFGLYQNLGLTLA), 100 to 120 (AVLGFILYTSAFVAESLRSGI), and 195 to 215 (LFVVFAIFAVGFMILTLPMGL). Positions 16–217 (FWVTIQLTVY…ILTLPMGLGL (202 aa)) constitute an ABC transmembrane type-1 domain.

This sequence belongs to the binding-protein-dependent transport system permease family. HisMQ subfamily. The complex is composed of two ATP-binding proteins (GluA), two transmembrane proteins (GluC and GluD) and a solute-binding protein (GluB).

It localises to the cell membrane. Its function is as follows. Part of the ABC transporter complex GluABCD involved in glutamate uptake. Probably responsible for the translocation of the substrate across the membrane. The polypeptide is Glutamate transport system permease protein GluC (Corynebacterium efficiens (strain DSM 44549 / YS-314 / AJ 12310 / JCM 11189 / NBRC 100395)).